The chain runs to 367 residues: DNA replication and repair protein RecF (367 aa).

30 to 37 (GANGSGKT) serves as a coordination point for ATP.

Belongs to the RecF family.

The protein localises to the cytoplasm. In terms of biological role, the RecF protein is involved in DNA metabolism; it is required for DNA replication and normal SOS inducibility. RecF binds preferentially to single-stranded, linear DNA. It also seems to bind ATP. The polypeptide is DNA replication and repair protein RecF (Pseudomonas savastanoi pv. phaseolicola (strain 1448A / Race 6) (Pseudomonas syringae pv. phaseolicola (strain 1448A / Race 6))).